We begin with the raw amino-acid sequence, 86 residues long: Large ribosomal subunit protein bL31B (86 aa).

It belongs to the bacterial ribosomal protein bL31 family. Type B subfamily. As to quaternary structure, part of the 50S ribosomal subunit.

In Streptococcus agalactiae serotype Ia (strain ATCC 27591 / A909 / CDC SS700), this protein is Large ribosomal subunit protein bL31B.